The following is a 69-amino-acid chain: Large ribosomal subunit protein uL29 (69 aa).

This sequence belongs to the universal ribosomal protein uL29 family.

This is Large ribosomal subunit protein uL29 from Staphylococcus aureus (strain Mu3 / ATCC 700698).